Reading from the N-terminus, the 641-residue chain is Tetracycline resistance protein TetS (641 aa).

One can recognise a tr-type G domain in the interval 1–242; sequence MKIINIGILA…VITSKLFSPT (242 aa). Residues 10–17, 74–78, and 128–131 contribute to the GTP site; these read AHVDAGKT, DTPGH, and NKID.

The protein belongs to the TRAFAC class translation factor GTPase superfamily. Classic translation factor GTPase family. TetM/TetO subfamily.

In terms of biological role, abolishes the inhibitory effect of tetracyclin on protein synthesis by a non-covalent modification of the ribosomes. This chain is Tetracycline resistance protein TetS (tetS), found in Listeria monocytogenes.